A 263-amino-acid polypeptide reads, in one-letter code: 4-hydroxy-2-oxo-heptane-1,7-dioate aldolase (263 aa).

His-45 (proton acceptor) is an active-site residue. Gln-147 is a substrate binding site. Glu-149 provides a ligand contact to a divalent metal cation. Substrate contacts are provided by Ala-174 and Asp-175. Asp-175 lines the a divalent metal cation pocket.

This sequence belongs to the HpcH/HpaI aldolase family. Homohexamer; trimer of dimers. Requires a divalent metal cation as cofactor.

The enzyme catalyses 4-hydroxy-2-oxoheptanedioate = succinate semialdehyde + pyruvate. It functions in the pathway aromatic compound metabolism; 4-hydroxyphenylacetate degradation; pyruvate and succinate semialdehyde from 4-hydroxyphenylacetate: step 7/7. Catalyzes the reversible retro-aldol cleavage of 4-hydroxy-2-ketoheptane-1,7-dioate (HKHD) to pyruvate and succinic semialdehyde. The polypeptide is 4-hydroxy-2-oxo-heptane-1,7-dioate aldolase (Salmonella dublin (strain CT_02021853)).